Reading from the N-terminus, the 252-residue chain is Adenylate kinase (252 aa).

47 to 52 (GSGKGT) contributes to the ATP binding site. An NMP region spans residues 67 to 96 (ATGDMLRSQVKQGTPLGLEAKKIMDQGGLV). Residues Thr68, Arg73, 94 to 96 (GLV), 123 to 126 (GFPR), and Gln130 each bind AMP. The segment at 164–201 (GRLVHPASGRSYHKIFSPPKKEMTDDITGEPLVQRSDD) is LID. ATP-binding positions include Arg165 and 174-175 (SY). The AMP site is built by Arg198 and Arg209. Gln237 provides a ligand contact to ATP.

It belongs to the adenylate kinase family. AK2 subfamily. As to quaternary structure, monomer.

The protein localises to the cytoplasm. It localises to the cytosol. It is found in the mitochondrion intermembrane space. The catalysed reaction is AMP + ATP = 2 ADP. In terms of biological role, catalyzes the reversible transfer of the terminal phosphate group between ATP and AMP. Plays an important role in cellular energy homeostasis and in adenine nucleotide metabolism. Adenylate kinase activity is critical for regulation of the phosphate utilization and the AMP de novo biosynthesis pathways. The protein is Adenylate kinase of Lodderomyces elongisporus (strain ATCC 11503 / CBS 2605 / JCM 1781 / NBRC 1676 / NRRL YB-4239) (Yeast).